The sequence spans 268 residues: Large ribosomal subunit protein bL9m (268 aa).

The transit peptide at 1-52 (MAAAAFAVPRGVQLRVLTERLLRGGVRELLRPRLSGSTPGSERDFSLSHSRG) directs the protein to the mitochondrion.

This sequence belongs to the bacterial ribosomal protein bL9 family. As to quaternary structure, component of the mitochondrial ribosome large subunit (39S) which comprises a 16S rRNA and about 50 distinct proteins.

It is found in the mitochondrion. The chain is Large ribosomal subunit protein bL9m (MRPL9) from Bos taurus (Bovine).